The chain runs to 288 residues: Serine/threonine-protein acetyltransferase YopJ (288 aa).

Residues histidine 109 and glutamate 128 contribute to the active site. Histidine 109 is a binding site for CoA. 167–168 is a CoA binding site; sequence RS. The active site involves cysteine 172. Residues 182–185 and 224–225 each bind 1D-myo-inositol hexakisphosphate; these read KLYI and KH. 227–230 contributes to the CoA binding site; sequence QGKK. Arginine 257 is a binding site for 1D-myo-inositol hexakisphosphate. 266 to 270 is a binding site for CoA; that stretch reads DGKEL.

It belongs to the acetyltransferase YopJ family. It depends on 1D-myo-inositol hexakisphosphate as a cofactor.

It is found in the secreted. The enzyme catalyses L-threonyl-[protein] + acetyl-CoA = O-acetyl-L-threonyl-[protein] + CoA. It catalyses the reaction L-seryl-[protein] + acetyl-CoA = O-acetyl-L-seryl-[protein] + CoA. With respect to regulation, 1D-myo-inositol hexakisphosphate activates protein-acetyltransferase activity via an allosteric mechanism: 1D-myo-inositol hexakisphosphate-binding induces a conformational rearrangement that stimulates the interaction with acetyl-CoA. Its function is as follows. Serine/threonine-protein acetyltransferase translocated into infected cells, which inhibits the host immune response and induces cell death by mediating acetylation of target proteins. Inhibits the MAPK and NF-kappa-B signaling pathways by acetylating protein-kinases such as MAP2K1, MAP2K6, MAP3K7/TAK1 and I-kappa-B kinase (CHUK/IKKA and IKBKB) on serine and threonine residues critical for their activation by phosphorylation, thereby preventing protein-kinase activation. Promotes pyroptosis, a programmed cell death, in host cells by mediating acetylation of MAP3K7/TAK1: MAP3K7/TAK1 inactivation triggers activation of caspase-8 (CASP8), followed by CASP8-dependent cleavage of gasdermin-D (GSDMD) and induction of pyroptosis. Also able to induce intestinal barrier dysfunction by acetylating and inhibiting host protein-kinases RIPK2/RICK and MAP3K7/TAK1, thereby promoting cell death. The protein is Serine/threonine-protein acetyltransferase YopJ of Yersinia pseudotuberculosis serotype I (strain IP32953).